Here is a 667-residue protein sequence, read N- to C-terminus: Leucine aminopeptidase 2 (667 aa).

A peptide contacts are provided by residues 188–190 (QCQ) and 318–323 (PYGGME). His347 lines the Zn(2+) pocket. Glu348 (proton acceptor) is an active-site residue. Residues His351 and Glu370 each contribute to the Zn(2+) site. Tyr436 acts as the Proton donor in catalysis.

It belongs to the peptidase M1 family. It depends on Zn(2+) as a cofactor.

It localises to the cytoplasm. The protein resides in the nucleus. The enzyme catalyses an epoxide + H2O = an ethanediol. Aminopeptidase that preferentially cleaves di- and tripeptides. Also has low epoxide hydrolase activity (in vitro). Can hydrolyze the epoxide leukotriene LTA(4) but it forms preferentially 5,6-dihydroxy-7,9,11,14-eicosatetraenoic acid rather than the cytokine leukotriene B(4) as the product compared to the homologous mammalian enzyme (in vitro). This chain is Leucine aminopeptidase 2 (ara-1), found in Neurospora crassa (strain ATCC 24698 / 74-OR23-1A / CBS 708.71 / DSM 1257 / FGSC 987).